Reading from the N-terminus, the 145-residue chain is 5-hydroxymethyl-dUMP N-hydrolase (145 aa).

5-hydroxymethyl-dUMP-binding residues include Gly7, Ile9, Arg10, Gly11, Ser79, Gly81, Glu85, and Ser109.

Belongs to the 2'-deoxynucleoside 5'-phosphate N-hydrolase 1 family. As to quaternary structure, monomer and homodimer.

The protein resides in the cytoplasm. Its subcellular location is the nucleus. It carries out the reaction 5-hydroxymethyl-dUMP + H2O = 5-hydroxymethyluracil + 2-deoxy-D-ribose 5-phosphate. In terms of biological role, part of a nucleotide salvage pathway that eliminates epigenetically modified 5-hydroxymethyl-dCMP (hmdCMP) in a two-step process entailing deamination to cytotoxic 5-hydroxymethyl-dUMP (hmdUMP), followed by its hydrolysis into 5-hydroxymethyluracil (hmU) and 2-deoxy-D-ribose 5-phosphate (deoxyribosephosphate). Catalyzes the second step in that pathway, the hydrolysis of the N-glycosidic bond in hmdUMP, degrading this cytotoxic nucleotide to avoid its genomic integration. This is 5-hydroxymethyl-dUMP N-hydrolase from Esox lucius (Northern pike).